Here is a 216-residue protein sequence, read N- to C-terminus: LexA repressor (216 aa).

The H-T-H motif DNA-binding region spans 29–49 (RAEIAQALGFRSPNAAEDHLK). Catalysis depends on for autocatalytic cleavage activity residues Ser-134 and Lys-171.

It belongs to the peptidase S24 family. Homodimer.

The catalysed reaction is Hydrolysis of Ala-|-Gly bond in repressor LexA.. Functionally, represses a number of genes involved in the response to DNA damage (SOS response), including recA and lexA. In the presence of single-stranded DNA, RecA interacts with LexA causing an autocatalytic cleavage which disrupts the DNA-binding part of LexA, leading to derepression of the SOS regulon and eventually DNA repair. In Bordetella bronchiseptica (strain ATCC BAA-588 / NCTC 13252 / RB50) (Alcaligenes bronchisepticus), this protein is LexA repressor.